Here is a 277-residue protein sequence, read N- to C-terminus: MTDKYAVFGNPIAQSKSPFIHTEFAKQTQQDLSYEAILAPVDQFDSSLVAFFADGGKGANVTAPFKEQAFSMCDELSEMAKLAGSVNTLFNLPYGKIGGDNTDGVGLVNDLEMLFGSLKGKRVLLVGAGGAARGCILPILQHNVAQLIICNRTHEKAEQLQTLFNEYGNFFAKPIEELISPFDLVINSTSAGLSGQLIALPSVIVDETTDCYDMTYSQQTTVFNQWAQAQNARKTADGLGMLVGQAAKSFSLWRGITPDTGSVMRKLRESLAQEAID.

Residues 15–17 (SKS) and threonine 62 contribute to the shikimate site. Catalysis depends on lysine 66, which acts as the Proton acceptor. Position 78 (glutamate 78) interacts with NADP(+). Shikimate is bound by residues asparagine 87 and aspartate 103. Residues 127-131 (GAGGA), 151-156 (NRTHEK), and glycine 238 each bind NADP(+).

Belongs to the shikimate dehydrogenase family. Homodimer.

The catalysed reaction is shikimate + NADP(+) = 3-dehydroshikimate + NADPH + H(+). It functions in the pathway metabolic intermediate biosynthesis; chorismate biosynthesis; chorismate from D-erythrose 4-phosphate and phosphoenolpyruvate: step 4/7. Its function is as follows. Involved in the biosynthesis of the chorismate, which leads to the biosynthesis of aromatic amino acids. Catalyzes the reversible NADPH linked reduction of 3-dehydroshikimate (DHSA) to yield shikimate (SA). The polypeptide is Shikimate dehydrogenase (NADP(+)) (Shewanella frigidimarina (strain NCIMB 400)).